The chain runs to 316 residues: L-lactate dehydrogenase 3 (316 aa).

NAD(+)-binding residues include valine 16, aspartate 37, arginine 42, and tyrosine 68. Arginine 91 is a substrate binding site. NAD(+)-binding positions include serine 104, 121 to 123, and threonine 146; that span reads ASN. 123–126 serves as a coordination point for substrate; that stretch reads NPVD. 151-154 contributes to the substrate binding site; it reads DSSR. Arginine 156 and histidine 171 together coordinate beta-D-fructose 1,6-bisphosphate. The active-site Proton acceptor is the histidine 178. Threonine 233 provides a ligand contact to substrate.

This sequence belongs to the LDH/MDH superfamily. LDH family. Homotetramer.

The protein resides in the cytoplasm. The catalysed reaction is (S)-lactate + NAD(+) = pyruvate + NADH + H(+). The protein operates within fermentation; pyruvate fermentation to lactate; (S)-lactate from pyruvate: step 1/1. Allosterically activated by fructose 1,6-bisphosphate (FBP). Catalyzes the conversion of lactate to pyruvate. This Bacillus cereus (strain ATCC 14579 / DSM 31 / CCUG 7414 / JCM 2152 / NBRC 15305 / NCIMB 9373 / NCTC 2599 / NRRL B-3711) protein is L-lactate dehydrogenase 3.